A 105-amino-acid polypeptide reads, in one-letter code: Larval cuticle protein 65Ag1 (105 aa).

Positions 1-18 (MKFLIVFVALFAVALAAP) are cleaved as a signal peptide. The 70-residue stretch at 34 to 103 (PESFKYDWET…PQGAHLPVAP (70 aa)) folds into the Chitin-binding type R&amp;R domain.

In terms of biological role, component of the cuticle of the larva. The sequence is that of Larval cuticle protein 65Ag1 from Drosophila melanogaster (Fruit fly).